We begin with the raw amino-acid sequence, 213 residues long: Probable nicotinate-nucleotide adenylyltransferase (213 aa).

The protein belongs to the NadD family.

The enzyme catalyses nicotinate beta-D-ribonucleotide + ATP + H(+) = deamido-NAD(+) + diphosphate. It functions in the pathway cofactor biosynthesis; NAD(+) biosynthesis; deamido-NAD(+) from nicotinate D-ribonucleotide: step 1/1. In terms of biological role, catalyzes the reversible adenylation of nicotinate mononucleotide (NaMN) to nicotinic acid adenine dinucleotide (NaAD). The sequence is that of Probable nicotinate-nucleotide adenylyltransferase from Ruegeria pomeroyi (strain ATCC 700808 / DSM 15171 / DSS-3) (Silicibacter pomeroyi).